The following is a 460-amino-acid chain: ATP synthase subunit beta (460 aa).

150-157 provides a ligand contact to ATP; it reads GGAGVGKT.

Belongs to the ATPase alpha/beta chains family. In terms of assembly, F-type ATPases have 2 components, CF(1) - the catalytic core - and CF(0) - the membrane proton channel. CF(1) has five subunits: alpha(3), beta(3), gamma(1), delta(1), epsilon(1). CF(0) has three main subunits: a(1), b(2) and c(9-12). The alpha and beta chains form an alternating ring which encloses part of the gamma chain. CF(1) is attached to CF(0) by a central stalk formed by the gamma and epsilon chains, while a peripheral stalk is formed by the delta and b chains.

The protein localises to the cell inner membrane. It catalyses the reaction ATP + H2O + 4 H(+)(in) = ADP + phosphate + 5 H(+)(out). In terms of biological role, produces ATP from ADP in the presence of a proton gradient across the membrane. The catalytic sites are hosted primarily by the beta subunits. The chain is ATP synthase subunit beta from Yersinia pestis bv. Antiqua (strain Angola).